A 125-amino-acid polypeptide reads, in one-letter code: Small ribosomal subunit protein uS13 (125 aa).

The protein belongs to the universal ribosomal protein uS13 family. Part of the 30S ribosomal subunit. Forms a loose heterodimer with protein S19. Forms two bridges to the 50S subunit in the 70S ribosome.

Located at the top of the head of the 30S subunit, it contacts several helices of the 16S rRNA. In the 70S ribosome it contacts the 23S rRNA (bridge B1a) and protein L5 of the 50S subunit (bridge B1b), connecting the 2 subunits; these bridges are implicated in subunit movement. Contacts the tRNAs in the A and P-sites. The polypeptide is Small ribosomal subunit protein uS13 (Rickettsia rickettsii (strain Iowa)).